Here is a 1161-residue protein sequence, read N- to C-terminus: DNA-directed RNA polymerase subunit beta' (1161 aa).

4 residues coordinate Zn(2+): C60, C62, C75, and C78. D449, D451, and D453 together coordinate Mg(2+). Residues C790, C864, C871, and C874 each coordinate Zn(2+).

The protein belongs to the RNA polymerase beta' chain family. The RNAP catalytic core consists of 2 alpha, 1 beta, 1 beta' and 1 omega subunit. When a sigma factor is associated with the core the holoenzyme is formed, which can initiate transcription. It depends on Mg(2+) as a cofactor. Zn(2+) serves as cofactor.

The catalysed reaction is RNA(n) + a ribonucleoside 5'-triphosphate = RNA(n+1) + diphosphate. DNA-dependent RNA polymerase catalyzes the transcription of DNA into RNA using the four ribonucleoside triphosphates as substrates. This Clostridioides difficile (strain 630) (Peptoclostridium difficile) protein is DNA-directed RNA polymerase subunit beta'.